Consider the following 295-residue polypeptide: Bifunctional protein FolD (295 aa).

NADP(+) contacts are provided by residues 166–168, Ser-195, and Ile-236; that span reads GRS.

Belongs to the tetrahydrofolate dehydrogenase/cyclohydrolase family. Homodimer.

It catalyses the reaction (6R)-5,10-methylene-5,6,7,8-tetrahydrofolate + NADP(+) = (6R)-5,10-methenyltetrahydrofolate + NADPH. It carries out the reaction (6R)-5,10-methenyltetrahydrofolate + H2O = (6R)-10-formyltetrahydrofolate + H(+). It participates in one-carbon metabolism; tetrahydrofolate interconversion. Functionally, catalyzes the oxidation of 5,10-methylenetetrahydrofolate to 5,10-methenyltetrahydrofolate and then the hydrolysis of 5,10-methenyltetrahydrofolate to 10-formyltetrahydrofolate. The protein is Bifunctional protein FolD of Chlorobium luteolum (strain DSM 273 / BCRC 81028 / 2530) (Pelodictyon luteolum).